The sequence spans 546 residues: Pyridine nucleotide-disulfide oxidoreductase domain-containing protein 1 (546 aa).

The protein belongs to the class-I pyridine nucleotide-disulfide oxidoreductase family. PYROXD1 subfamily. It depends on FAD as a cofactor.

The sequence is that of Pyridine nucleotide-disulfide oxidoreductase domain-containing protein 1 (pyroxd1) from Dictyostelium discoideum (Social amoeba).